Consider the following 346-residue polypeptide: Cell division protein ZipA (346 aa).

Residues 1–6 (MEDLQL) lie on the Periplasmic side of the membrane. The helical transmembrane segment at 7–27 (VLFVLGAIAIVAVLVHGFWSI) threads the bilayer. At 28-346 (RRQQPKSLKD…DYLHRIRANA (319 aa)) the chain is on the cytoplasmic side. Disordered regions lie at residues 76–103 (ANEA…QPVE) and 121–145 (QPDF…RQEP).

The protein belongs to the ZipA family. Interacts with FtsZ via their C-terminal domains.

Its subcellular location is the cell inner membrane. Its function is as follows. Essential cell division protein that stabilizes the FtsZ protofilaments by cross-linking them and that serves as a cytoplasmic membrane anchor for the Z ring. Also required for the recruitment to the septal ring of downstream cell division proteins. The protein is Cell division protein ZipA of Shewanella sp. (strain MR-7).